The sequence spans 510 residues: Proline--tRNA ligase (510 aa).

It belongs to the class-II aminoacyl-tRNA synthetase family. ProS type 3 subfamily. Homodimer.

The protein localises to the cytoplasm. It carries out the reaction tRNA(Pro) + L-proline + ATP = L-prolyl-tRNA(Pro) + AMP + diphosphate. Its function is as follows. Catalyzes the attachment of proline to tRNA(Pro) in a two-step reaction: proline is first activated by ATP to form Pro-AMP and then transferred to the acceptor end of tRNA(Pro). In Sphingomonas elodea, this protein is Proline--tRNA ligase.